The following is a 200-amino-acid chain: 3-isopropylmalate dehydratase small subunit (200 aa).

Belongs to the LeuD family. LeuD type 1 subfamily. As to quaternary structure, heterodimer of LeuC and LeuD.

The enzyme catalyses (2R,3S)-3-isopropylmalate = (2S)-2-isopropylmalate. It functions in the pathway amino-acid biosynthesis; L-leucine biosynthesis; L-leucine from 3-methyl-2-oxobutanoate: step 2/4. In terms of biological role, catalyzes the isomerization between 2-isopropylmalate and 3-isopropylmalate, via the formation of 2-isopropylmaleate. The protein is 3-isopropylmalate dehydratase small subunit of Serratia proteamaculans (strain 568).